Reading from the N-terminus, the 234-residue chain is Core atranone cluster (CAC) protein 1 (234 aa).

It participates in mycotoxin biosynthesis. In terms of biological role, part of the core atranone cluster (CAC) which products are predicted to catalyze most or all steps of mycotoxin atranone synthesis, starting from geranylgeranyl pyrophosphate (GGPP). The initial cyclization of GGPP to dolabellane is probably performed by the terpene cyclase ATR13. The Baeyer-Villiger oxidation near the end of the atranone synthesis, which converts atranones D and E to atranones F and G is predicted to be catalyzed by the monooxygenase ATR8. Of the CAC's other predicted gene products, the reducing PKS ATR6 might synthesize a polyketide chain. This polyketide is probably transferred onto the atranone backbone by the polyketide transferase ATR5. Other predicted CAC products include 4 oxygenases (ATR2, ATR3, ATR4, and ATR14), 3 short-chain reductases (ATR7, ATR9, and ATR10), and a methyltransferase (ATR12). These may all be involved in the various steps of atranone biosynthesis, although their specific roles must await experimental determination. In Stachybotrys chlorohalonatus (strain IBT 40285), this protein is Core atranone cluster (CAC) protein 1.